We begin with the raw amino-acid sequence, 221 residues long: Nuclear phosphoprotein UL3 homolog (221 aa).

It belongs to the alphaherpesvirinae HHV-1 UL3 family. Post-translationally, phosphorylated.

It localises to the host nucleus. The protein is Nuclear phosphoprotein UL3 homolog of Varicella-zoster virus (strain Dumas) (HHV-3).